The chain runs to 141 residues: Small ribosomal subunit protein uS8 (141 aa).

This sequence belongs to the universal ribosomal protein uS8 family. In terms of assembly, part of the 30S ribosomal subunit. Contacts proteins S5 and S12.

Its function is as follows. One of the primary rRNA binding proteins, it binds directly to 16S rRNA central domain where it helps coordinate assembly of the platform of the 30S subunit. The chain is Small ribosomal subunit protein uS8 from Mycoplasma genitalium (strain ATCC 33530 / DSM 19775 / NCTC 10195 / G37) (Mycoplasmoides genitalium).